The sequence spans 344 residues: tRNA N6-adenosine threonylcarbamoyltransferase (344 aa).

Fe cation-binding residues include His-111 and His-115. Substrate is bound by residues 134–138 (LVSGG), Asp-167, Gly-180, and Asn-272. Asp-300 contributes to the Fe cation binding site.

It belongs to the KAE1 / TsaD family. Fe(2+) is required as a cofactor.

The protein resides in the cytoplasm. It carries out the reaction L-threonylcarbamoyladenylate + adenosine(37) in tRNA = N(6)-L-threonylcarbamoyladenosine(37) in tRNA + AMP + H(+). Required for the formation of a threonylcarbamoyl group on adenosine at position 37 (t(6)A37) in tRNAs that read codons beginning with adenine. Is involved in the transfer of the threonylcarbamoyl moiety of threonylcarbamoyl-AMP (TC-AMP) to the N6 group of A37, together with TsaE and TsaB. TsaD likely plays a direct catalytic role in this reaction. The polypeptide is tRNA N6-adenosine threonylcarbamoyltransferase (Idiomarina loihiensis (strain ATCC BAA-735 / DSM 15497 / L2-TR)).